An 864-amino-acid chain; its full sequence is Disintegrin and metalloproteinase domain-containing protein 15 (864 aa).

The signal sequence occupies residues 1–17 (MRLALLWALGLLGAGSP). The interval 18–45 (RPSPPLPNIGGTEEEQQASPERTLSGSM) is disordered. Residues 18 to 207 (RPSPPLPNIG…EQHHAHRLKR (190 aa)) constitute a propeptide that is removed on maturation. Polar residues predominate over residues 34-45 (QASPERTLSGSM). A Cysteine switch motif is present at residues 177–184 (HTCAPSWH). C179 is a Zn(2+) binding site. Residues 208–696 (DVVTETKIVE…TQLKATSSLT (489 aa)) are Extracellular-facing. The Peptidase M12B domain maps to 214–415 (KIVELVIVAD…GMGSCLFERQ (202 aa)). N-linked (GlcNAc...) asparagine glycosylation occurs at N238. Intrachain disulfides connect C324–C410, C366–C394, C368–C377, and C481–C501. H349 serves as a coordination point for Zn(2+). Residue E350 is part of the active site. Zn(2+)-binding residues include H353 and H359. N-linked (GlcNAc...) asparagine glycosylation is found at N390 and N393. Residues 422–509 (SSLCGNMFVD…QCPSDIRLGD (88 aa)) form the Disintegrin domain. Residues N607 and N612 are each glycosylated (N-linked (GlcNAc...) asparagine). 3 cysteine pairs are disulfide-bonded: C658-C668, C662-C674, and C676-C685. One can recognise an EGF-like domain in the interval 658 to 686 (CRRKCHGHGVCDSSGHCRCEEGWAPPDCM). A helical membrane pass occupies residues 697 to 717 (TGLLLSLLLLLVLVLLGASYW). Residues Y716 and Y736 each carry the phosphotyrosine; by HCK and LCK modification. At 718–864 (HRARLHQRLC…PPPAASSLYL (147 aa)) the chain is on the cytoplasmic side. A disordered region spans residues 736 to 864 (YRAPQSCPPE…PPPAASSLYL (129 aa)). Residues 741–750 (SCPPERPGPP) show a composition bias toward pro residues. The span at 752–762 (RAQQMTGTKQA) shows a compositional bias: polar residues. Composition is skewed to pro residues over residues 768–780 (PVPPSRPLPPNPV) and 814–825 (TKPPPPRKPLPA). Short sequence motifs (SH3-binding) lie at residues 816–822 (PPPPRKP) and 851–857 (RPAPPPP).

As to quaternary structure, interacts specifically with Src family protein-tyrosine kinases (PTKs). Interacts with ITAGV-ITGB3 (vitronectin receptor). Interacts with SH3GL2 and SNX9; this interaction occurs preferentially with ADAM15 precursor, rather than the processed form, suggesting it occurs in a secretory pathway compartment prior to the medial Golgi. Interacts with ITAG9-ITGB1. Interacts with SH3PXD2A. Interacts with ITAGV-ITGB1. Interacts with GRB2, HCK, ITSN1, ITSN2, LYN, MAPK1, MAPK3, NCF1, NCK1, nephrocystin, PTK6, SNX33, LCK and SRC. The cofactor is Zn(2+). The precursor is cleaved by a furin endopeptidase. An additional membrane proximal site of cleavage affects a small percentage of the proteins and results in disulfide-linked fragments. The prodomain is apparently cleaved in several positions that are N-terminal of the furin cleavage site. In terms of processing, may be partially sialylated. Post-translationally, phosphorylation increases association with PTKs. As to expression, expressed moderately in pericytes of retina. Expressed in testis and in spermatozoa from the caput, corpus, and cauda epididymis, as well as in non-capacitated and acrosome-reacted sperm (at protein level). Highly expressed in heart, brain, lung, and kidney. Expressed at lower levels in spleen, liver, testis and muscle.

The protein resides in the endomembrane system. It is found in the cell junction. Its subcellular location is the adherens junction. It localises to the cell projection. The protein localises to the cilium. The protein resides in the flagellum. It is found in the cytoplasmic vesicle. Its subcellular location is the secretory vesicle. It localises to the acrosome. Active metalloproteinase with gelatinolytic and collagenolytic activity. Plays a role in the wound healing process. Mediates both heterotypic intraepithelial cell/T-cell interactions and homotypic T-cell aggregation. Inhibits beta-1 integrin-mediated cell adhesion and migration of airway smooth muscle cells. Suppresses cell motility on or towards fibronectin possibly by driving alpha-v/beta-1 integrin (ITAGV-ITGB1) cell surface expression via ERK1/2 inactivation. Cleaves E-cadherin in response to growth factor deprivation. Plays a role in glomerular cell migration. Plays a role in pathological neovascularization. May play a role in cartilage remodeling. May be proteolytically processed, during sperm epididymal maturation and the acrosome reaction. May play a role in sperm-egg binding through its disintegrin domain. Interactions with egg membrane could be mediated via binding between the disintegrin-like domain to one or more integrin receptors on the egg. The sequence is that of Disintegrin and metalloproteinase domain-containing protein 15 (Adam15) from Mus musculus (Mouse).